Here is a 610-residue protein sequence, read N- to C-terminus: Dihydroxy-acid dehydratase (610 aa).

D81 is a Mg(2+) binding site. Position 122 (C122) interacts with [2Fe-2S] cluster. Mg(2+) contacts are provided by D123 and K124. K124 bears the N6-carboxylysine mark. C196 lines the [2Fe-2S] cluster pocket. Residue E492 coordinates Mg(2+). S518 (proton acceptor) is an active-site residue.

It belongs to the IlvD/Edd family. In terms of assembly, homodimer. It depends on [2Fe-2S] cluster as a cofactor. Mg(2+) serves as cofactor.

It catalyses the reaction (2R)-2,3-dihydroxy-3-methylbutanoate = 3-methyl-2-oxobutanoate + H2O. The catalysed reaction is (2R,3R)-2,3-dihydroxy-3-methylpentanoate = (S)-3-methyl-2-oxopentanoate + H2O. Its pathway is amino-acid biosynthesis; L-isoleucine biosynthesis; L-isoleucine from 2-oxobutanoate: step 3/4. The protein operates within amino-acid biosynthesis; L-valine biosynthesis; L-valine from pyruvate: step 3/4. Functions in the biosynthesis of branched-chain amino acids. Catalyzes the dehydration of (2R,3R)-2,3-dihydroxy-3-methylpentanoate (2,3-dihydroxy-3-methylvalerate) into 2-oxo-3-methylpentanoate (2-oxo-3-methylvalerate) and of (2R)-2,3-dihydroxy-3-methylbutanoate (2,3-dihydroxyisovalerate) into 2-oxo-3-methylbutanoate (2-oxoisovalerate), the penultimate precursor to L-isoleucine and L-valine, respectively. The chain is Dihydroxy-acid dehydratase from Ruegeria pomeroyi (strain ATCC 700808 / DSM 15171 / DSS-3) (Silicibacter pomeroyi).